Here is a 325-residue protein sequence, read N- to C-terminus: Beta-ketoacyl-[acyl-carrier-protein] synthase III (325 aa).

Catalysis depends on residues Cys-119 and His-252. The tract at residues 253-257 is ACP-binding; it reads QANIR. Asn-282 is an active-site residue.

Belongs to the thiolase-like superfamily. FabH family. In terms of assembly, homodimer.

It is found in the cytoplasm. It carries out the reaction malonyl-[ACP] + acetyl-CoA + H(+) = 3-oxobutanoyl-[ACP] + CO2 + CoA. The protein operates within lipid metabolism; fatty acid biosynthesis. Functionally, catalyzes the condensation reaction of fatty acid synthesis by the addition to an acyl acceptor of two carbons from malonyl-ACP. Catalyzes the first condensation reaction which initiates fatty acid synthesis and may therefore play a role in governing the total rate of fatty acid production. Possesses both acetoacetyl-ACP synthase and acetyl transacylase activities. Its substrate specificity determines the biosynthesis of branched-chain and/or straight-chain of fatty acids. In Paracidovorax citrulli (strain AAC00-1) (Acidovorax citrulli), this protein is Beta-ketoacyl-[acyl-carrier-protein] synthase III.